The primary structure comprises 758 residues: 5-methyltetrahydropteroyltriglutamate--homocysteine methyltransferase (758 aa).

Residues 17-20 (RELK) and lysine 113 each bind 5-methyltetrahydropteroyltri-L-glutamate. L-homocysteine is bound by residues 433–435 (IGS) and glutamate 486. Residues 433-435 (IGS) and glutamate 486 each bind L-methionine. Residues 517-518 (RC) and tryptophan 563 contribute to the 5-methyltetrahydropteroyltri-L-glutamate site. Aspartate 601 serves as a coordination point for L-homocysteine. Aspartate 601 contributes to the L-methionine binding site. Residue glutamate 607 coordinates 5-methyltetrahydropteroyltri-L-glutamate. Residues histidine 643, cysteine 645, and glutamate 667 each coordinate Zn(2+). Catalysis depends on histidine 696, which acts as the Proton donor. Zn(2+) is bound at residue cysteine 728.

The protein belongs to the vitamin-B12 independent methionine synthase family. The cofactor is Zn(2+).

The catalysed reaction is 5-methyltetrahydropteroyltri-L-glutamate + L-homocysteine = tetrahydropteroyltri-L-glutamate + L-methionine. It participates in amino-acid biosynthesis; L-methionine biosynthesis via de novo pathway; L-methionine from L-homocysteine (MetE route): step 1/1. Functionally, catalyzes the transfer of a methyl group from 5-methyltetrahydrofolate to homocysteine resulting in methionine formation. This Nitrosomonas europaea (strain ATCC 19718 / CIP 103999 / KCTC 2705 / NBRC 14298) protein is 5-methyltetrahydropteroyltriglutamate--homocysteine methyltransferase.